Reading from the N-terminus, the 92-residue chain is Small ribosomal subunit protein uS19 (92 aa).

Belongs to the universal ribosomal protein uS19 family.

In terms of biological role, protein S19 forms a complex with S13 that binds strongly to the 16S ribosomal RNA. The polypeptide is Small ribosomal subunit protein uS19 (Polaromonas sp. (strain JS666 / ATCC BAA-500)).